We begin with the raw amino-acid sequence, 237 residues long: Cysteine-rich venom protein tigrin (237 aa).

Residues 1–18 (MIVFILLSLAAVLRQSFG) form the signal peptide. The region spanning 37-165 (VNIHNSFRRS…LYNYFYVCQY (129 aa)) is the SCP domain. 8 disulfides stabilise this stretch: Cys74–Cys152, Cys91–Cys166, Cys147–Cys163, Cys185–Cys192, Cys188–Cys197, Cys201–Cys232, Cys210–Cys226, and Cys217–Cys230. A ShKT domain is found at 201–232 (CTHKDDYNNCNSLVSDCQSDWDKSHCPATCFC).

The protein belongs to the CRISP family. As to expression, expressed by the venom gland.

The protein resides in the secreted. This protein does not inhibit smooth muscle contraction elicited by high potassium levels or caffeine. The chain is Cysteine-rich venom protein tigrin from Rhabdophis tigrinus tigrinus (Tiger keelback snake).